A 170-amino-acid polypeptide reads, in one-letter code: Protein Rex (170 aa).

Residues 1–16 are compositionally biased toward basic residues; it reads MPKTRRQRTRRARRNR. 2 disordered regions span residues 1–27 and 69–170; these read MPKTRRQRTRRARRNRPPTPWPISQDL and VQST…GEKP. The Nuclear localization signal, and RNA-binding (RxRE) signature appears at 2 to 19; the sequence is PKTRRQRTRRARRNRPPT. Residues 57–71 are homomultimerization; sequence PPAYIDMPSWPPVQS. Positions 82–95 are enriched in low complexity; it reads ALSALLSNTLSLAS. The Nuclear export signal motif lies at 83-94; it reads LSALLSNTLSLA. A homomultimerization region spans residues 124–132; sequence PSFNQCEST. Over residues 143 to 160 the composition is skewed to low complexity; sequence PSGISSPPSPSPNLASVP. Phosphoserine; by host is present on residues Ser-151 and Ser-153. Over residues 161-170 the composition is skewed to polar residues; that stretch reads KTSTPPGEKP.

It belongs to the deltaretrovirus Rex protein family. Homomultimer. Phosphorylation is essential for RNA-binding and function.

The protein resides in the host nucleus. The protein localises to the host nucleolus. Its subcellular location is the host cytoplasm. In terms of biological role, rex escorts unspliced gag-pro-pol and singly spliced env mRNAs out of the nucleus of infected cells. These mRNAs carry a recognition sequence called Rex responsive element (RxRE or XRE) located at the 3' region of the long terminal repeat (LTR). This function is essential since most HTLV proteins are translated from unspliced or partially spliced pre-mRNAs that cannot exit the nucleus by the pathway used by fully processed cellular mRNAs. The protein is Protein Rex of Human T-cell leukemia virus 2 (HTLV-2).